Here is a 397-residue protein sequence, read N- to C-terminus: DNA excision repair protein ERCC-8 (397 aa).

WD repeat units lie at residues Ile41–His81, Val97–Val137, Gly184–Leu224, Ala243–Val282, and Gly332–Asp371. 3 positions are modified to phosphoserine: Ser391, Ser392, and Ser393.

Part of the CSA complex (also named DCX(ERCC8) complex), a DCX E3 ubiquitin-protein ligase complex containing ERCC8, RBX1, DDB1 and CUL4A; the CSA complex interacts with RNA polymerase II; upon UV irradiation it interacts with the COP9 signalosome and preferentially with the hyperphosphorylated form of RNA polymerase II. Interacts with ERCC6/CSB (via CIM motif); promoting recruitment to lesion-stalled RNA polymerase II (Pol II). Interacts with KIAA1530/UVSSA. Interacts with a subunit of RNA polymerase II TFIIH.

Its subcellular location is the nucleus. The protein localises to the chromosome. The protein resides in the nucleus matrix. It functions in the pathway protein modification; protein ubiquitination. Its function is as follows. Substrate-recognition component of the CSA complex, a DCX (DDB1-CUL4-X-box) E3 ubiquitin-protein ligase complex, involved in transcription-coupled nucleotide excision repair (TC-NER), a process during which RNA polymerase II-blocking lesions are rapidly removed from the transcribed strand of active genes. Following recruitment to lesion-stalled RNA polymerase II (Pol II), the CSA complex mediates ubiquitination of Pol II subunit POLR2A/RPB1 at 'Lys-1268', a critical TC-NER checkpoint, governing RNA Pol II stability and initiating DNA damage excision by TFIIH recruitment. The CSA complex also promotes the ubiquitination and subsequent proteasomal degradation of ERCC6/CSB in a UV-dependent manner; ERCC6 degradation is essential for the recovery of RNA synthesis after transcription-coupled repair. Also plays a role in DNA double-strand breaks (DSSBs) repair by non-homologous end joining (NHEJ). This Mus musculus (Mouse) protein is DNA excision repair protein ERCC-8.